The chain runs to 218 residues: N-(5'-phosphoribosyl)anthranilate isomerase (218 aa).

The protein belongs to the TrpF family.

It catalyses the reaction N-(5-phospho-beta-D-ribosyl)anthranilate = 1-(2-carboxyphenylamino)-1-deoxy-D-ribulose 5-phosphate. It functions in the pathway amino-acid biosynthesis; L-tryptophan biosynthesis; L-tryptophan from chorismate: step 3/5. This Desulfatibacillum aliphaticivorans protein is N-(5'-phosphoribosyl)anthranilate isomerase.